The following is a 318-amino-acid chain: Protease HtpX homolog (318 aa).

2 consecutive transmembrane segments (helical) span residues Thr6–Gly26 and Ala28–Ser48. A Zn(2+)-binding site is contributed by His130. Glu131 is an active-site residue. Residue His134 coordinates Zn(2+). 2 helical membrane passes run Ile145–Gly165 and Pro173–Val193. Glu202 is a Zn(2+) binding site. The segment at Asn284 to Ser318 is disordered.

The protein belongs to the peptidase M48B family. Zn(2+) serves as cofactor.

The protein localises to the cell inner membrane. This Rhizobium etli (strain CIAT 652) protein is Protease HtpX homolog.